Here is a 1957-residue protein sequence, read N- to C-terminus: Chromatin modification-related protein EAF1 A (1957 aa).

Disordered regions lie at residues 108-208, 261-287, 323-373, and 449-469; these read ASPH…TDLV, NRVSSNSLNTKVDGEPVVRESTAGSKT, GGSP…SHAN, and NQSHRSTAEMQTKEKSSETEK. Positions 140–151 are enriched in basic and acidic residues; sequence SENKSVEGERNL. Composition is skewed to polar residues over residues 261 to 270, 333 to 342, and 355 to 372; these read NRVSSNSLNT, GQKNSSTQLN, and TNRGATGTNGLESESSHA. The HSA domain occupies 563–641; sequence CGTAPVEVRE…LSNAILQFWS (79 aa). 2 disordered regions span residues 833–909 and 928–950; these read GSNS…AVQK and AETSGRPKKKKKTHQGSAYDQTW. The span at 884 to 898 shows a compositional bias: polar residues; that stretch reads TDASSGDTSSFQDEY. One can recognise an SANT domain in the interval 1049 to 1105; the sequence is SGNPWSLFEDQALVVLVHDMGPNWELISDAMNSTLKIKCIYRNPTECKDRHKILMDK. Disordered stretches follow at residues 1107-1131, 1282-1314, 1344-1367, 1449-1644, 1687-1768, 1804-1840, and 1876-1957; these read AGDGADSAEDSGNSQSYPSTLPGIP, TPVLPTSGAHPSTPGSSGVVLSNNLPTTSGLQS, LSGRNLQQPSLSTPAAVSGSDRGH, QGNS…QQLN, PVRP…IAPA, ELSKKSQAERMPRVPQSVTNTTQTVSMGTTKGMPQAS, and SSNT…TKVE. 6 stretches are compositionally biased toward polar residues: residues 1116–1125, 1290–1314, 1344–1358, 1459–1472, 1479–1492, and 1501–1510; these read DSGNSQSYPS, AHPSTPGSSGVVLSNNLPTTSGLQS, LSGRNLQQPSLSTPA, SNLSSGFTNQTTPV, LSQQHQMSPQSHVL, and QSPSQATGAQ. Composition is skewed to low complexity over residues 1523 to 1534 and 1545 to 1562; these read QRYLQQQQQQQQ and VQQPQGSSVSSSPQNSPQ. Residues 1563-1579 are compositionally biased toward pro residues; that stretch reads TQPPVSPQPLSMPPVSP. Polar residues-rich tracts occupy residues 1582–1595, 1604–1618, 1635–1644, 1691–1722, and 1734–1758; these read NINAMAQQKPQKSQ, SPQSGTSGVNNQAGK, RQPTQGQQLN, DQQSSVGTTTSTNLQSKPFVSPLSSNHSQQLP, and QQQMQLHSDNSIQGQSSPATPCNIL. The span at 1759–1768 shows a compositional bias: low complexity; it reads STSSPSIAPA. Over residues 1805-1815 the composition is skewed to basic and acidic residues; the sequence is LSKKSQAERMP. 2 stretches are compositionally biased toward polar residues: residues 1819 to 1832 and 1876 to 1894; these read QSVTNTTQTVSMGT and SSNTDSAGNDPVSTPNQGL. Composition is skewed to basic and acidic residues over residues 1913-1922 and 1932-1942; these read SEEKRPKLPE and LASEEQPHLEE.

This sequence belongs to the EAF1 family. In terms of assembly, component of the NuA4 histone acetyltransferase complex. Interacts with ARP4 and SWC4, and (via HSA domain) with TAF14 and TAF14B. In terms of tissue distribution, expressed in leaves.

It localises to the nucleus. Its function is as follows. Component of the NuA4 histone acetyltransferase complex which is involved in transcriptional activation of selected genes principally by acetylation of nucleosomal histone H4 and H2A. The sequence is that of Chromatin modification-related protein EAF1 A (EAF1A) from Arabidopsis thaliana (Mouse-ear cress).